The following is a 638-amino-acid chain: MPNIKLPDGSVRSFDHPVTVAEVAASIGSGLAKAALAGRVDGKAVDLSYCIERDSELAILTDKSAEGVDVIRHSTAHLLAHAVKELFPEAQVTIGPVIENGFYYDFSYKRPFTPEDLEAIEKRMAELVKRELPVEREVWPRDKAVAFFKSIGEHYKAEIIASIPANEDVSLYRQGEFVDLCRGPHVPSTGRLKVFKLTKLAGAYWRGDAKNEMLQRVYGTAWAKKEDLESYLHMLEEAEKRDHRKLGRQLDLFHIQEEAPGMVFWHAKGWTLWQQVEQYLRGTISRHGYQEVRTPQIVDRSLWEKSGHWGMYSDLMFTTQSEKHDYAVKPMNCPCHIQIFNQGLKSYRDLPLRMAEFGSCHRNEPSGSLHGIMRVRNFVQDDAHIFCTDEQVQEEAAAFIALLQKVYADFGFRDIQIKLSTRPEKRVGADEQWDAAEAALAAALKAQGLEYELQPGEGAFYGPKIEFSLKDCLNRVWQCGTLQLDFNLPVRLGAEYVAEDNTKKFPVMLHRAIVGSLERFIGILIEHYAGAMPLWLAPVHAVVMNISEGQADYATEVVNRLREAGFRVEADLRNEKINYKIREHSVHKLPYQLVVGEKEKAAGVVAVRVRGGQDLGQLSLDKLIERWNGELASRSGPV.

Positions 1-61 (MPNIKLPDGS…ERDSELAILT (61 aa)) constitute a TGS domain. Residues 242–533 (DHRKLGRQLD…LIEHYAGAMP (292 aa)) form a catalytic region. The Zn(2+) site is built by Cys333, His384, and His510.

The protein belongs to the class-II aminoacyl-tRNA synthetase family. In terms of assembly, homodimer. Zn(2+) is required as a cofactor.

The protein localises to the cytoplasm. It catalyses the reaction tRNA(Thr) + L-threonine + ATP = L-threonyl-tRNA(Thr) + AMP + diphosphate + H(+). Functionally, catalyzes the attachment of threonine to tRNA(Thr) in a two-step reaction: L-threonine is first activated by ATP to form Thr-AMP and then transferred to the acceptor end of tRNA(Thr). Also edits incorrectly charged L-seryl-tRNA(Thr). This is Threonine--tRNA ligase from Azoarcus sp. (strain BH72).